Here is a 62-residue protein sequence, read N- to C-terminus: uncharacterized protein (62 aa).

A coiled-coil region spans residues Lys28 to Val61.

This is an uncharacterized protein from Archaeoglobus fulgidus (strain ATCC 49558 / DSM 4304 / JCM 9628 / NBRC 100126 / VC-16).